The chain runs to 695 residues: Frizzled and smoothened-like protein O (695 aa).

The N-terminal stretch at 1–23 (MKKLNYLLIVSFIFILNLLISKS) is a signal peptide. The Extracellular portion of the chain corresponds to 24–233 (QVLIDVTAKC…KEYKTKFYSE (210 aa)). One can recognise an FZ domain in the interval 28–173 (DVTAKCELID…ANEEIQCSGP (146 aa)). Intrachain disulfides connect Cys-33–Cys-96, Cys-42–Cys-89, Cys-80–Cys-125, Cys-114–Cys-170, and Cys-118–Cys-138. Asn-47 carries N-linked (GlcNAc...) asparagine glycosylation. N-linked (GlcNAc...) asparagine glycosylation is found at Asn-137 and Asn-178. The helical transmembrane segment at 234-254 (AILFSFSTACSFYLIFTFGVF) threads the bilayer. Topologically, residues 255-262 (PNKYTNRN) are cytoplasmic. Residues 263–283 (WIIVYLGITAICLAISYAVQE) form a helical membrane-spanning segment. At 284–307 (ARYGGGDWRCTSDPGRYKSSEDGT) the chain is on the extracellular side. Residues 308–328 (CILGGFFFQIGGLGTILFLSL) form a helical membrane-spanning segment. Residues 329–343 (YSFDMFLTMNMMTNK) are Cytoplasmic-facing. Residues 344–364 (YFIQTSVGMWALIIFYALLPI) traverse the membrane as a helical segment. Over 365–387 (KHYESSIASAGCWLSNEDNMFWQ) the chain is Extracellular. Residues 388–408 (YFCFYVPSYVATFFLGVFIIT) traverse the membrane as a helical segment. Over 409–435 (SIYKVFKMTVMFKSIKDKRILLLNIRS) the chain is Cytoplasmic. Residues 436 to 456 (IIFLIAIMFCVSFSTMYPLYV) form a helical membrane-spanning segment. Residues 457–500 (TYNGDDFSKSVEVYVTCLYANIPNGNEVCPQIVFPQFSLRYMNA) lie on the Extracellular side of the membrane. The helical transmembrane segment at 501 to 521 (ITMAIIGIVGLIGLGIDPHIL) threads the bilayer. The Cytoplasmic segment spans residues 522–695 (QIYRESIRFK…NIERINSDNV (174 aa)). Polar residues predominate over residues 545-556 (SPQPLKQGSTTD). Residues 545 to 695 (SPQPLKQGST…NIERINSDNV (151 aa)) form a disordered region. Over residues 593–608 (NLSASSESSNNLLNQS) the composition is skewed to low complexity. Over residues 609–625 (TPGNLNINESISSIDTS) the composition is skewed to polar residues. Low complexity predominate over residues 626-686 (NNNNNNNNNN…NNNNNNNNNN (61 aa)). The stretch at 653-691 (NNNNNNNNNNNNNNNNNNNNYSNNNNNNNNNNNNIERIN) forms a coiled coil.

Belongs to the G-protein coupled receptor Fz/Smo family.

The protein localises to the membrane. This is Frizzled and smoothened-like protein O (fslO) from Dictyostelium discoideum (Social amoeba).